The following is an 854-amino-acid chain: MAAFSGETAVKGIHLINDDGELLPEADINDFLISALAGKGSSDILYRTGVNYHVVGVFGGQSSGKSTLLNSLFQTEFMTMDEAHHRGQTTKGAFMTRAILDAQTHRKEREEGEGADLLKREKPQPLFVLDFEGTDGIERGEDQNFERQLSLFALSVADILIINMWAVDVGRFNAANMNLLRTVFEVNLQLFSHGSYVKEEKPTLLVVLRDFTENDPAPSFETVRKSFDKIWGNIQKPESFTDATIDVVFDLRYRVLPHYKLQRPEFDSAVSEFREWFVSPKNSNFLFSNCSMFRGVPADGMPSYLSNCWNAICSSKDLDIPTQRDMLARHRCADAKHAAIEEFKEVCEEYTKKIQRGDVIPQFTRALEETIERLLKNFSDQTKLYKVSVVHETAEALEEELGDMELHLLKQYAKSIAVTVLAALDGVIGSSVDEAVRWLQNEARSVLLLEGKDNKGDRIDGGGLAQGVLDTAEGLVDNKRCRLFVEEFWKRICLSLQGAFDMLNGCSKSHQAALSSLYGKFATAIMDDQAVREGVAHAAMEGAQHKLRNRFVAMAENAAETVHQVFEQALTSKTDGTVRFFRTTDGLLGAEKQARQAGLVLLGCLLYYRLKLVPVEVDAGEVEGEGTTRALQRLVRDRCRFQVRDNRTEKNFFLHFTNISDVPRYPLDAPTSVVDSGDTTADTVNADNVLLSHNALQCAFHLYKQKADFTLQMQLRNIESGKQSLPPWVLPVMLLLGWNELYYLLTSPILLIAIIVIAVLFFKTFLKSQLEVLEEKCPVWLVVSVKALLQQAQALQNAYAPTEAVRGGGGGAQFRDPTQATSVSGASAGVSSESSSAASPRRRVCRESRDKGED.

Residues 1-724 (MAAFSGETAV…LRNIESGKQS (724 aa)) lie on the Cytoplasmic side of the membrane. One can recognise a GB1/RHD3-type G domain in the interval 49–291 (GVNYHVVGVF…NSNFLFSNCS (243 aa)). 59-66 (GGQSSGKS) lines the GTP pocket. Residues 336-386 (KHAAIEEFKEVCEEYTKKIQRGDVIPQFTRALEETIERLLKNFSDQTKLYK) adopt a coiled-coil conformation. The chain crosses the membrane as a helical span at residues 725 to 745 (LPPWVLPVMLLLGWNELYYLL). Residues 746–748 (TSP) are Lumenal-facing. The helical transmembrane segment at 749 to 769 (ILLIAIIVIAVLFFKTFLKSQ) threads the bilayer. Residues 770 to 854 (LEVLEEKCPV…CRESRDKGED (85 aa)) are Cytoplasmic-facing. The tract at residues 808-854 (GGGGAQFRDPTQATSVSGASAGVSSESSSAASPRRRVCRESRDKGED) is disordered. The span at 822–839 (SVSGASAGVSSESSSAAS) shows a compositional bias: low complexity. The segment covering 845–854 (CRESRDKGED) has biased composition (basic and acidic residues).

This sequence belongs to the TRAFAC class dynamin-like GTPase superfamily. GB1/RHD3 GTPase family. RHD3 subfamily.

The protein resides in the endoplasmic reticulum membrane. In terms of biological role, probable GTP-binding protein that may be involved in cell development. The chain is Protein SEY1 homolog from Trypanosoma brucei brucei (strain 927/4 GUTat10.1).